The primary structure comprises 950 residues: Translation initiation factor IF-2 (950 aa).

Disordered regions lie at residues 57–254 (LAER…AVVI) and 304–328 (DVSR…KSLS). Low complexity-rich tracts occupy residues 101-131 (AEPQ…EPAA) and 139-169 (AAPL…QPAA). A compositionally biased stretch (pro residues) spans 170–215 (PAAPPAPTAQPSAPPPAAAQPRPPQPSAPSRPPPPGYRPAPPPGAR). Positions 216 to 233 (PPVSAAPGAPGQPGAAGQ) are enriched in low complexity. Residues 449 to 618 (IRPPVVTVMG…ALQSEVLELK (170 aa)) enclose the tr-type G domain. The tract at residues 458 to 465 (GHVDHGKT) is G1. A GTP-binding site is contributed by 458-465 (GHVDHGKT). The segment at 483–487 (GITQH) is G2. The tract at residues 504-507 (DTPG) is G3. GTP contacts are provided by residues 504–508 (DTPGH) and 558–561 (NKVD). The G4 stretch occupies residues 558-561 (NKVD). Positions 594–596 (SAR) are G5.

This sequence belongs to the TRAFAC class translation factor GTPase superfamily. Classic translation factor GTPase family. IF-2 subfamily.

It is found in the cytoplasm. Its function is as follows. One of the essential components for the initiation of protein synthesis. Protects formylmethionyl-tRNA from spontaneous hydrolysis and promotes its binding to the 30S ribosomal subunits. Also involved in the hydrolysis of GTP during the formation of the 70S ribosomal complex. The sequence is that of Translation initiation factor IF-2 from Anaeromyxobacter dehalogenans (strain 2CP-C).